The chain runs to 247 residues: ATP synthase subunit a, chloroplastic (247 aa).

5 helical membrane-spanning segments follow: residues 38 to 58, 95 to 115, 134 to 154, 199 to 219, and 220 to 240; these read QVLI…TVAV, VPFI…GALL, INTT…AGLT, LVVV…VMFL, and GLFT…AYIG.

The protein belongs to the ATPase A chain family. In terms of assembly, F-type ATPases have 2 components, CF(1) - the catalytic core - and CF(0) - the membrane proton channel. CF(1) has five subunits: alpha(3), beta(3), gamma(1), delta(1), epsilon(1). CF(0) has four main subunits: a, b, b' and c.

The protein localises to the plastid. It is found in the chloroplast thylakoid membrane. Key component of the proton channel; it plays a direct role in the translocation of protons across the membrane. The polypeptide is ATP synthase subunit a, chloroplastic (Acorus calamus var. americanus (American sweet flag)).